We begin with the raw amino-acid sequence, 267 residues long: Hydroxyethylthiazole kinase (267 aa).

Met51 contacts substrate. Residues Arg127 and Ser173 each coordinate ATP. Ala200 contacts substrate.

Belongs to the Thz kinase family. Mg(2+) serves as cofactor.

It catalyses the reaction 5-(2-hydroxyethyl)-4-methylthiazole + ATP = 4-methyl-5-(2-phosphooxyethyl)-thiazole + ADP + H(+). It participates in cofactor biosynthesis; thiamine diphosphate biosynthesis; 4-methyl-5-(2-phosphoethyl)-thiazole from 5-(2-hydroxyethyl)-4-methylthiazole: step 1/1. Catalyzes the phosphorylation of the hydroxyl group of 4-methyl-5-beta-hydroxyethylthiazole (THZ). This Psychromonas ingrahamii (strain DSM 17664 / CCUG 51855 / 37) protein is Hydroxyethylthiazole kinase.